Reading from the N-terminus, the 55-residue chain is UPF0434 protein BPEN_388 (55 aa).

This sequence belongs to the UPF0434 family.

This is UPF0434 protein BPEN_388 from Blochmanniella pennsylvanica (strain BPEN).